We begin with the raw amino-acid sequence, 567 residues long: Potassium-transporting ATPase potassium-binding subunit (567 aa).

The next 11 membrane-spanning stretches (helical) occupy residues 5-25 (GWIQ…PLGG), 64-84 (TTYA…LYML), 136-156 (GLTV…IALI), 179-199 (LYVL…LGVP), 254-274 (ISNM…TNVF), 285-305 (WAIF…CYWA), 332-352 (IAMS…AVIA), 359-376 (ALGG…EIII), 421-441 (MLAV…ASVI), 486-506 (ITIG…AMAI), and 529-549 (LFVG…FFPA).

Belongs to the KdpA family. As to quaternary structure, the system is composed of three essential subunits: KdpA, KdpB and KdpC.

It localises to the cell inner membrane. Functionally, part of the high-affinity ATP-driven potassium transport (or Kdp) system, which catalyzes the hydrolysis of ATP coupled with the electrogenic transport of potassium into the cytoplasm. This subunit binds the periplasmic potassium ions and delivers the ions to the membrane domain of KdpB through an intramembrane tunnel. The protein is Potassium-transporting ATPase potassium-binding subunit of Brucella anthropi (strain ATCC 49188 / DSM 6882 / CCUG 24695 / JCM 21032 / LMG 3331 / NBRC 15819 / NCTC 12168 / Alc 37) (Ochrobactrum anthropi).